The chain runs to 344 residues: Phenylalanine--tRNA ligase alpha subunit (344 aa).

Mg(2+) is bound at residue E256.

This sequence belongs to the class-II aminoacyl-tRNA synthetase family. Phe-tRNA synthetase alpha subunit type 1 subfamily. In terms of assembly, tetramer of two alpha and two beta subunits. It depends on Mg(2+) as a cofactor.

It localises to the cytoplasm. It catalyses the reaction tRNA(Phe) + L-phenylalanine + ATP = L-phenylalanyl-tRNA(Phe) + AMP + diphosphate + H(+). This Bacillus mycoides (strain KBAB4) (Bacillus weihenstephanensis) protein is Phenylalanine--tRNA ligase alpha subunit.